A 297-amino-acid chain; its full sequence is 4-hydroxy-tetrahydrodipicolinate synthase (297 aa).

Residue Thr49 participates in pyruvate binding. Catalysis depends on Tyr137, which acts as the Proton donor/acceptor. Residue Lys166 is the Schiff-base intermediate with substrate of the active site. Ile208 is a pyruvate binding site.

Belongs to the DapA family. In terms of assembly, homotetramer; dimer of dimers.

The protein resides in the cytoplasm. It catalyses the reaction L-aspartate 4-semialdehyde + pyruvate = (2S,4S)-4-hydroxy-2,3,4,5-tetrahydrodipicolinate + H2O + H(+). The protein operates within amino-acid biosynthesis; L-lysine biosynthesis via DAP pathway; (S)-tetrahydrodipicolinate from L-aspartate: step 3/4. Catalyzes the condensation of (S)-aspartate-beta-semialdehyde [(S)-ASA] and pyruvate to 4-hydroxy-tetrahydrodipicolinate (HTPA). The polypeptide is 4-hydroxy-tetrahydrodipicolinate synthase (Porphyromonas gingivalis (strain ATCC 33277 / DSM 20709 / CIP 103683 / JCM 12257 / NCTC 11834 / 2561)).